Reading from the N-terminus, the 398-residue chain is tRNA-specific 2-thiouridylase MnmA (398 aa).

ATP contacts are provided by residues 19 to 26 (AMSGGVDS) and Leu-45. Cys-113 acts as the Nucleophile in catalysis. A disulfide bridge connects residues Cys-113 and Cys-210. Gly-137 contributes to the ATP binding site. The tract at residues 160–162 (RDQ) is interaction with tRNA. The active-site Cysteine persulfide intermediate is the Cys-210.

Belongs to the MnmA/TRMU family.

The protein localises to the cytoplasm. The enzyme catalyses S-sulfanyl-L-cysteinyl-[protein] + uridine(34) in tRNA + AH2 + ATP = 2-thiouridine(34) in tRNA + L-cysteinyl-[protein] + A + AMP + diphosphate + H(+). Its function is as follows. Catalyzes the 2-thiolation of uridine at the wobble position (U34) of tRNA, leading to the formation of s(2)U34. In Rhodopseudomonas palustris (strain HaA2), this protein is tRNA-specific 2-thiouridylase MnmA.